The chain runs to 969 residues: MAGKARVHELAKELGVTSKELLATLKEQGEFVKSASSTVEAPVARRLRESFASKSAPANGAKPGPAASARPGAKPTPGGPRPGPRTPAPAASAPQAPAEQTARPTDARPGPAVKPGPAPTPARPAAPEAPAAKAAPEAPAQRPTPGGPRPGQQQQRPGAPAQGGPRPGPKPGPKTPRVGNNPYSSQPAPERERPAARPGPGGPRPGPAQGGPRPGPGQGAPRPGATPGPRPAAAQGGPRPGGPRPSPGSMPPRPNPGAMPQRTPRPGPSAGGRPGRPGGAPGAGRPGGGGGGYRGGGGAPGAGAGAPAGGGFRGRPGGGGGRPGGPGGRGGAAGAFGRPGGAPRRGRKSKRQKRQEYDSMQAPSVGGVRLPRGNGEIIRLARGASLSDFAEKIDANPAALVQALFNLGEMVTATQSVNDETLELLGSEMNYVVQVVSPEDEDRELLESFDLTYGEDEGDEDDLQVRPPVVTVMGHVDHGKTRLLDTIRKANVREGEAGGITQHIGAYQVMTHLGDEDRLITFIDTPGHEAFTAMRARGAKATDIAILVVAADDGVMPQTVEAINHAQAADVPIVVAVNKIDKEGANPEKIRQQLTEYGLVAEEYGGDTMFVDISAKQGTNIDALLEAVLLTADAALDLRANPNMDAQGVAIEAHLDRGRGPVATVLIQRGTLRVGDSIVAGDAYGRVRRMVDEHGEDVEAALPSRPVQVVGFTSVPGAGDNLLVVDEDRIARQIADRRNARKRNALAARSRKRISLEDLDAALKETSELNLILKGDNAGTVEALEEALMGIEVGDEVRLRVIDRGVGGVTETNVNLASASNAIIIGFNVRAEGKATELANREGVDIRYYSVIYQAIDEIEKALKGMLKPIYEEVELGRAEIRAIFRSSKVGNIAGCMVLSGSVKRNAKARLLRDNVVVAETTTISSLRREKDDVTEVREGFECGMTLTYNDIKEGDIIEAYELREKPRD.

The tract at residues 50–370 is disordered; the sequence is SFASKSAPAN…QAPSVGGVRL (321 aa). Positions 54 to 76 are enriched in low complexity; it reads KSAPANGAKPGPAASARPGAKPT. Residues 77 to 87 show a composition bias toward pro residues; it reads PGGPRPGPRTP. The span at 88-102 shows a compositional bias: low complexity; that stretch reads APAASAPQAPAEQTA. The segment covering 112 to 124 has biased composition (pro residues); that stretch reads AVKPGPAPTPARP. The span at 125–164 shows a compositional bias: low complexity; the sequence is AAPEAPAAKAAPEAPAQRPTPGGPRPGQQQQRPGAPAQGG. The span at 240-267 shows a compositional bias: pro residues; it reads PGGPRPSPGSMPPRPNPGAMPQRTPRPG. The span at 269 to 340 shows a compositional bias: gly residues; sequence SAGGRPGRPG…GAAGAFGRPG (72 aa). Over residues 344–353 the composition is skewed to basic residues; the sequence is RRGRKSKRQK. One can recognise a tr-type G domain in the interval 465-636; the sequence is VRPPVVTVMG…AVLLTADAAL (172 aa). Positions 474–481 are G1; that stretch reads GHVDHGKT. 474 to 481 is a GTP binding site; that stretch reads GHVDHGKT. Residues 499 to 503 are G2; it reads GITQH. The segment at 524–527 is G3; that stretch reads DTPG. Residues 524–528 and 578–581 contribute to the GTP site; these read DTPGH and NKID. The G4 stretch occupies residues 578–581; it reads NKID. The segment at 614-616 is G5; sequence SAK.

Belongs to the TRAFAC class translation factor GTPase superfamily. Classic translation factor GTPase family. IF-2 subfamily.

It localises to the cytoplasm. Functionally, one of the essential components for the initiation of protein synthesis. Protects formylmethionyl-tRNA from spontaneous hydrolysis and promotes its binding to the 30S ribosomal subunits. Also involved in the hydrolysis of GTP during the formation of the 70S ribosomal complex. This Nocardia farcinica (strain IFM 10152) protein is Translation initiation factor IF-2.